Reading from the N-terminus, the 52-residue chain is Ornatin-C (52 aa).

The Cell attachment site signature appears at 42–44 (RGD).

It belongs to the ornatin family.

The protein localises to the secreted. In terms of biological role, potent inhibitor of fibrinogen interaction with platelet receptors expressed on glycoprotein IIb-IIIa complex. May prevent blood from clotting during either feeding and/or storage of ingested blood. The sequence is that of Ornatin-C from Placobdella ornata (Turtle leech).